The chain runs to 104 residues: MQLYTYLYLLVPLVTFHLILSTGTLAHGGTLTERRSTDTTALKPEPVLLQKSDARSTDDNDKDRLTQMKRILKKRGNKARGEEEHSKYQECLREIRVNKVQQEC.

Residues 1 to 26 form the signal peptide; sequence MQLYTYLYLLVPLVTFHLILSTGTLA. Residues 27–80 constitute a propeptide that is removed on maturation; sequence HGGTLTERRSTDTTALKPEPVLLQKSDARSTDDNDKDRLTQMKRILKKRGNKAR. The segment at 29 to 87 is disordered; it reads GTLTERRSTDTTALKPEPVLLQKSDARSTDDNDKDRLTQMKRILKKRGNKARGEEEHSK. Residues 52–66 are compositionally biased toward basic and acidic residues; the sequence is SDARSTDDNDKDRLT. 5 positions are modified to 4-carboxyglutamate: E83, E84, E90, E94, and E103. A divalent metal cation contacts are provided by E90 and E94. C91 and C104 are oxidised to a cystine.

This sequence belongs to the conotoxin B superfamily. In terms of tissue distribution, expressed by the venom duct.

It is found in the secreted. Functionally, conantokins inhibit N-methyl-D-aspartate (NMDA) receptors. This toxin has the highest potency for the NR2B/GRIN2B subunit, followed by NR2A/GRIN2A, NR2C/GRIN2C, and NR2D/GRIN2D subunits. The polypeptide is Conantokin-P (Conus purpurascens (Purple cone)).